A 668-amino-acid chain; its full sequence is DNA ligase (668 aa).

NAD(+)-binding positions include 32–36, 81–82, and glutamate 110; these read DSEYD and SL. The active-site N6-AMP-lysine intermediate is lysine 112. Positions 133, 167, 283, and 307 each coordinate NAD(+). 4 residues coordinate Zn(2+): cysteine 401, cysteine 404, cysteine 419, and cysteine 424. The BRCT domain occupies 586 to 668; it reads QTDSEFNGKT…IQKQKEVENK (83 aa).

Belongs to the NAD-dependent DNA ligase family. LigA subfamily. Mg(2+) is required as a cofactor. It depends on Mn(2+) as a cofactor.

The enzyme catalyses NAD(+) + (deoxyribonucleotide)n-3'-hydroxyl + 5'-phospho-(deoxyribonucleotide)m = (deoxyribonucleotide)n+m + AMP + beta-nicotinamide D-nucleotide.. Its function is as follows. DNA ligase that catalyzes the formation of phosphodiester linkages between 5'-phosphoryl and 3'-hydroxyl groups in double-stranded DNA using NAD as a coenzyme and as the energy source for the reaction. It is essential for DNA replication and repair of damaged DNA. The chain is DNA ligase from Staphylococcus carnosus (strain TM300).